Consider the following 397-residue polypeptide: Argininosuccinate synthase (397 aa).

9-17 (AYSGGLDTS) contacts ATP. Residue Y86 participates in L-citrulline binding. An ATP-binding site is contributed by G116. L-aspartate contacts are provided by T118, N122, and D123. Residue N122 participates in L-citrulline binding. Positions 126, 174, 259, and 271 each coordinate L-citrulline.

Belongs to the argininosuccinate synthase family. Type 1 subfamily. As to quaternary structure, homotetramer.

Its subcellular location is the cytoplasm. It carries out the reaction L-citrulline + L-aspartate + ATP = 2-(N(omega)-L-arginino)succinate + AMP + diphosphate + H(+). The protein operates within amino-acid biosynthesis; L-arginine biosynthesis; L-arginine from L-ornithine and carbamoyl phosphate: step 2/3. This Lactococcus lactis subsp. cremoris (strain MG1363) protein is Argininosuccinate synthase.